Here is a 102-residue protein sequence, read N- to C-terminus: Small ribosomal subunit protein uS17 (102 aa).

Positions 1–15 (MTDETASQEASQSTD) are enriched in polar residues. The segment at 1 to 20 (MTDETASQEASQSTDAAAPA) is disordered.

This sequence belongs to the universal ribosomal protein uS17 family. Part of the 30S ribosomal subunit.

In terms of biological role, one of the primary rRNA binding proteins, it binds specifically to the 5'-end of 16S ribosomal RNA. This chain is Small ribosomal subunit protein uS17, found in Frankia casuarinae (strain DSM 45818 / CECT 9043 / HFP020203 / CcI3).